We begin with the raw amino-acid sequence, 183 residues long: NADH-ubiquinone oxidoreductase 20.8 kDa subunit (183 aa).

CHCH domains follow at residues 44-87 and 88-130; these read GARC…IADI and NKSC…LGLK. 4 consecutive short sequence motifs (cx9C motif) follow at residues 47 to 57, 69 to 79, 91 to 101, and 112 to 122; these read CRDYNDDFMQC, CLKEGRRVTRC, CLEEFRKHWTC, and CRPAEWKLNKC. Disulfide bonds link Cys47/Cys79, Cys57/Cys69, Cys91/Cys122, and Cys101/Cys112. Residues 161 to 183 are disordered; the sequence is EPFVPPTQTGDNNKAPAAASSSS.

It belongs to the complex I NDUFA8 subunit family. In terms of assembly, complex I is composed of about 40 different subunits. This is a component of the hydrophobic fraction. It depends on iron-sulfur cluster as a cofactor.

The protein resides in the mitochondrion inner membrane. Accessory subunit of the mitochondrial membrane respiratory chain NADH dehydrogenase (Complex I), that is believed not to be involved in catalysis. Complex I functions in the transfer of electrons from NADH to the respiratory chain. The immediate electron acceptor for the enzyme is believed to be ubiquinone. The chain is NADH-ubiquinone oxidoreductase 20.8 kDa subunit from Neurospora crassa (strain ATCC 24698 / 74-OR23-1A / CBS 708.71 / DSM 1257 / FGSC 987).